The primary structure comprises 1034 residues: Putative beta-glucuronidase (1034 aa).

Catalysis depends on E432, which acts as the Proton donor. Residues 909 to 1034 (VDISAEEGVL…GPFIDELFID (126 aa)) enclose the CBM6 domain.

It belongs to the glycosyl hydrolase 2 family.

Its subcellular location is the cytoplasm. The enzyme catalyses a beta-D-glucuronoside + H2O = D-glucuronate + an alcohol. In terms of biological role, glycoside hydrolase that may be involved in ulvan degradation. Ulvan is the main polysaccharide component of the Ulvales (green seaweed) cell wall. It is composed of disaccharide building blocks comprising 3-sulfated rhamnose (Rha3S) linked to D-glucuronic acid (GlcA), L-iduronic acid (IduA), or D-xylose (Xyl). In Formosa agariphila (strain DSM 15362 / KCTC 12365 / LMG 23005 / KMM 3901 / M-2Alg 35-1), this protein is Putative beta-glucuronidase.